A 315-amino-acid chain; its full sequence is tRNA uridine(34) hydroxylase (315 aa).

Residues 145-235 (MKNDFILVDM…GIIEYVNFIK (91 aa)) enclose the Rhodanese domain. Catalysis depends on C199, which acts as the Cysteine persulfide intermediate.

This sequence belongs to the TrhO family.

The enzyme catalyses uridine(34) in tRNA + AH2 + O2 = 5-hydroxyuridine(34) in tRNA + A + H2O. In terms of biological role, catalyzes oxygen-dependent 5-hydroxyuridine (ho5U) modification at position 34 in tRNAs. This Wigglesworthia glossinidia brevipalpis protein is tRNA uridine(34) hydroxylase.